The primary structure comprises 309 residues: Homoserine O-acetyltransferase (309 aa).

Residue cysteine 148 is the Acyl-thioester intermediate of the active site. Positions 169 and 198 each coordinate substrate. Catalysis depends on histidine 241, which acts as the Proton acceptor. Glutamate 243 is an active-site residue. Arginine 255 is a binding site for substrate.

It belongs to the MetA family.

The protein localises to the cytoplasm. The catalysed reaction is L-homoserine + acetyl-CoA = O-acetyl-L-homoserine + CoA. It participates in amino-acid biosynthesis; L-methionine biosynthesis via de novo pathway; O-acetyl-L-homoserine from L-homoserine: step 1/1. Functionally, transfers an acetyl group from acetyl-CoA to L-homoserine, forming acetyl-L-homoserine. In vitro, can also use propionyl-CoA as acyl donor. This chain is Homoserine O-acetyltransferase, found in Shouchella clausii (Alkalihalobacillus clausii).